Here is a 122-residue protein sequence, read N- to C-terminus: Large ribosomal subunit protein uL14 (122 aa).

It belongs to the universal ribosomal protein uL14 family. In terms of assembly, part of the 50S ribosomal subunit. Forms a cluster with proteins L3 and L19. In the 70S ribosome, L14 and L19 interact and together make contacts with the 16S rRNA in bridges B5 and B8.

Functionally, binds to 23S rRNA. Forms part of two intersubunit bridges in the 70S ribosome. In Nitratiruptor sp. (strain SB155-2), this protein is Large ribosomal subunit protein uL14.